We begin with the raw amino-acid sequence, 316 residues long: GTP cyclohydrolase FolE2 1 (316 aa).

This sequence belongs to the GTP cyclohydrolase IV family.

The enzyme catalyses GTP + H2O = 7,8-dihydroneopterin 3'-triphosphate + formate + H(+). It functions in the pathway cofactor biosynthesis; 7,8-dihydroneopterin triphosphate biosynthesis; 7,8-dihydroneopterin triphosphate from GTP: step 1/1. Converts GTP to 7,8-dihydroneopterin triphosphate. This Burkholderia lata (strain ATCC 17760 / DSM 23089 / LMG 22485 / NCIMB 9086 / R18194 / 383) protein is GTP cyclohydrolase FolE2 1.